The sequence spans 165 residues: uncharacterized protein (165 aa).

Helical transmembrane passes span 7–27 (LWLA…QITV) and 141–161 (KGTP…IALL).

The protein localises to the cell membrane. This is an uncharacterized protein from Archaeoglobus fulgidus (strain ATCC 49558 / DSM 4304 / JCM 9628 / NBRC 100126 / VC-16).